A 209-amino-acid chain; its full sequence is Thymidylate kinase (209 aa).

An ATP-binding site is contributed by G10 to T17.

Belongs to the thymidylate kinase family.

The catalysed reaction is dTMP + ATP = dTDP + ADP. In terms of biological role, phosphorylation of dTMP to form dTDP in both de novo and salvage pathways of dTTP synthesis. This chain is Thymidylate kinase, found in Pediococcus pentosaceus (strain ATCC 25745 / CCUG 21536 / LMG 10740 / 183-1w).